Reading from the N-terminus, the 340-residue chain is Ketol-acid reductoisomerase (NADP(+)) (340 aa).

Residues 1–183 (MAITVYYDKD…GGGRTGIIET (183 aa)) form the KARI N-terminal Rossmann domain. NADP(+)-binding positions include 26–29 (FGSQ), arginine 49, serine 52, serine 54, and 84–87 (DEIQ). Residue histidine 109 is part of the active site. Glycine 135 provides a ligand contact to NADP(+). One can recognise a KARI C-terminal knotted domain in the interval 184–329 (TFKAETETDL…RNLRAMMPWI (146 aa)). Mg(2+) contacts are provided by aspartate 192, glutamate 196, glutamate 228, and glutamate 232. Serine 253 is a binding site for substrate.

Belongs to the ketol-acid reductoisomerase family. It depends on Mg(2+) as a cofactor.

The enzyme catalyses (2R)-2,3-dihydroxy-3-methylbutanoate + NADP(+) = (2S)-2-acetolactate + NADPH + H(+). The catalysed reaction is (2R,3R)-2,3-dihydroxy-3-methylpentanoate + NADP(+) = (S)-2-ethyl-2-hydroxy-3-oxobutanoate + NADPH + H(+). It functions in the pathway amino-acid biosynthesis; L-isoleucine biosynthesis; L-isoleucine from 2-oxobutanoate: step 2/4. It participates in amino-acid biosynthesis; L-valine biosynthesis; L-valine from pyruvate: step 2/4. Its function is as follows. Involved in the biosynthesis of branched-chain amino acids (BCAA). Catalyzes an alkyl-migration followed by a ketol-acid reduction of (S)-2-acetolactate (S2AL) to yield (R)-2,3-dihydroxy-isovalerate. In the isomerase reaction, S2AL is rearranged via a Mg-dependent methyl migration to produce 3-hydroxy-3-methyl-2-ketobutyrate (HMKB). In the reductase reaction, this 2-ketoacid undergoes a metal-dependent reduction by NADPH to yield (R)-2,3-dihydroxy-isovalerate. The sequence is that of Ketol-acid reductoisomerase (NADP(+)) from Campylobacter jejuni subsp. jejuni serotype O:6 (strain 81116 / NCTC 11828).